A 687-amino-acid chain; its full sequence is A-kinase anchor protein 8 (687 aa).

Residues 1–195 (MEQSYGGYGA…FLRGRGQGRF (195 aa)) form an interaction with MCM2 region. The interval 1-210 (MEQSYGGYGA…SSTFIRSDPF (210 aa)) is interaction with DPY30. The residue at position 72 (Ser-72) is a Phosphoserine. The tract at residues 104 to 124 (SKEGGRGGISSGGEGMQDRDS) is disordered. At Arg-109 the chain carries Asymmetric dimethylarginine; alternate. Arg-109 carries the post-translational modification Omega-N-methylarginine; alternate. The span at 109 to 118 (RGGISSGGEG) shows a compositional bias: gly residues. The segment at 109 to 201 (RGGISSGGEG…QGRFQDRSNS (93 aa)) is interaction with DDX5. The segment at 127–152 (RFQPYESYDSRPCMPEHTPYRPSYSY) is nuclear matrix targeting site. The interval 189-221 (GRGQGRFQDRSNSSTFIRSDPFMPPSASSEPLS) is disordered. Ser-199 bears the Phosphoserine mark. Residues Arg-233 and Arg-277 each carry the omega-N-methylarginine modification. The disordered stretch occupies residues 278-380 (SQTRIRDWPR…KQRRRDRMRD (103 aa)). 2 stretches are compositionally biased toward basic and acidic residues: residues 281-295 (RIRD…ERFG) and 312-321 (PDAKLARADS). A Bipartite nuclear localization signal motif is present at residues 287–304 (RRRGFERFGPDNMGRKRK). Lys-315 participates in a covalent cross-link: Glycyl lysine isopeptide (Lys-Gly) (interchain with G-Cter in SUMO2). 3 positions are modified to phosphoserine: Ser-321, Ser-326, and Ser-337. Acidic residues predominate over residues 322 to 332 (EGDLSENDDGA). Over residues 336 to 358 (RSGDEEFRGEDDLCDSRKQRGEK) the composition is skewed to basic and acidic residues. The tract at residues 385-448 (RIQFACSVCK…NKKIEKRRQE (64 aa)) is involved in chromatin-binding. C2H2 AKAP95-type zinc fingers lie at residues 390–412 (CSVC…SKFH) and 479–502 (CLAC…SVDH). Positions 523 to 565 (SVLNNKHIVKMLEKYLKGEDPFVNETADLETEGDENLGEEKET) are involved in condensin complex recruitment. Thr-553 is modified (phosphothreonine). Lys-563 is covalently cross-linked (Glycyl lysine isopeptide (Lys-Gly) (interchain with G-Cter in SUMO2)). Residues 568–585 (EVAAEVLAEVITAAVKAV) form an RII-binding region. The tract at residues 572 to 589 (EVLAEVITAAVKAVEGDG) is required for interaction with MYCBP. The tract at residues 606–687 (VDTAEAGSDS…DAEAKDTPTE (82 aa)) is disordered. Residues 633 to 648 (RNMEDMARGEAAEARN) are compositionally biased toward basic and acidic residues. Over residues 649–666 (EAAVPAAAAGSPVPVIAI) the composition is skewed to low complexity. Ser-659 carries the post-translational modification Phosphoserine.

Belongs to the AKAP95 family. In terms of assembly, binds to dimeric RII-alpha regulatory subunit of PKA during mitosis. Interacts (via C-terminus) with FIGN. Interacts with NCAPD2, CCND1, CCND3, MCM2, RPS6KA1, PDE4A, CASP3. Interacts with DDX5, CCNE1. Interacts with NFKB1; detetcted in the cytoplasm. Interacts with MYCBP; MYCBP is translocated to the nucleus and the interaction prevents the association of the PKA catalytic subunit leading to suppression of PKA activity. Interacts with DPY30; mediating AKAP8 association with at least the MLL4/WBP7 HMT complex. Interacts with HDAC3; increased during mitosis. Interacts with GJA1; in the nucleus and in the nuclear membrane; the nuclear association increases with progress of cell cycle G1, S and G2 phase and decreases in M phase. Post-translationally, phosphorylated on tyrosine residues probably by SRC subfamily protein kinases; multiple phosphorylation is leading to dissociation from nuclear structures implicated in chromatin structural changes. In terms of tissue distribution, widely expressed. The protein has been detected in liver, fibroblasts, granulosa, myoblast, lymphoma and Sertoli cells.

Its subcellular location is the nucleus matrix. It is found in the nucleus. It localises to the nucleolus. The protein localises to the cytoplasm. In terms of biological role, anchoring protein that mediates the subcellular compartmentation of cAMP-dependent protein kinase (PKA type II). Acts as an anchor for a PKA-signaling complex onto mitotic chromosomes, which is required for maintenance of chromosomes in a condensed form throughout mitosis. Recruits condensin complex subunit NCAPD2 to chromosomes required for chromatin condensation; the function appears to be independent from PKA-anchoring. May help to deliver cyclin D/E to CDK4 to facilitate cell cycle progression. Required for cell cycle G2/M transition and histone deacetylation during mitosis. In mitotic cells recruits HDAC3 to the vicinity of chromatin leading to deacetylation and subsequent phosphorylation at 'Ser-10' of histone H3; in this function may act redundantly with AKAP8L. Involved in nuclear retention of RPS6KA1 upon ERK activation thus inducing cell proliferation. May be involved in regulation of DNA replication by acting as scaffold for MCM2. Enhances HMT activity of the KMT2 family MLL4/WBP7 complex and is involved in transcriptional regulation. In a teratocarcinoma cell line is involved in retinoic acid-mediated induction of developmental genes implicating H3 'Lys-4' methylation. May be involved in recruitment of active CASP3 to the nucleus in apoptotic cells. May act as a carrier protein of GJA1 for its transport to the nucleus. May play a repressive role in the regulation of rDNA transcription. Preferentially binds GC-rich DNA in vitro. In cells, associates with ribosomal RNA (rRNA) chromatin, preferentially with rRNA promoter and transcribed regions. Involved in modulation of Toll-like receptor signaling. Required for the cAMP-dependent suppression of TNF-alpha in early stages of LPS-induced macrophage activation; the function probably implicates targeting of PKA to NFKB1. The polypeptide is A-kinase anchor protein 8 (Akap8) (Rattus norvegicus (Rat)).